The primary structure comprises 302 residues: Quinolinate synthase (302 aa).

Positions 24 and 41 each coordinate iminosuccinate. Cys86 lines the [4Fe-4S] cluster pocket. Residues 112-114 (YVN) and Ser129 each bind iminosuccinate. Cys171 is a [4Fe-4S] cluster binding site. Iminosuccinate is bound by residues 197 to 199 (HPE) and Thr214. [4Fe-4S] cluster is bound at residue Cys259.

This sequence belongs to the quinolinate synthase family. Type 2 subfamily. It depends on [4Fe-4S] cluster as a cofactor.

Its subcellular location is the cytoplasm. It carries out the reaction iminosuccinate + dihydroxyacetone phosphate = quinolinate + phosphate + 2 H2O + H(+). The protein operates within cofactor biosynthesis; NAD(+) biosynthesis; quinolinate from iminoaspartate: step 1/1. Its function is as follows. Catalyzes the condensation of iminoaspartate with dihydroxyacetone phosphate to form quinolinate. In Dehalococcoides mccartyi (strain ATCC BAA-2100 / JCM 16839 / KCTC 5957 / BAV1), this protein is Quinolinate synthase.